The following is a 423-amino-acid chain: Putative competence-damage inducible protein (423 aa).

This sequence belongs to the CinA family.

In Streptococcus uberis (strain ATCC BAA-854 / 0140J), this protein is Putative competence-damage inducible protein.